Here is a 743-residue protein sequence, read N- to C-terminus: Inhibitor of nuclear factor kappa-B kinase subunit alpha (743 aa).

The 286-residue stretch at 15–300 (WDMKDRLGTG…IDCGRPRCFM (286 aa)) folds into the Protein kinase domain. ATP is bound by residues 21–29 (LGTGGFGNV) and Lys-44. Asp-144 serves as the catalytic Proton acceptor. The interval 453-474 (LLRFNTNLTKMKNTMVSASQQL) is leucine-zipper. Positions 736 to 741 (MDFSWL) are NEMO-binding.

The protein belongs to the protein kinase superfamily. Ser/Thr protein kinase family. I-kappa-B kinase subfamily.

Its subcellular location is the cytoplasm. The protein localises to the nucleus. It catalyses the reaction L-seryl-[I-kappa-B protein] + ATP = O-phospho-L-seryl-[I-kappa-B protein] + ADP + H(+). Its activity is regulated as follows. Activated when phosphorylated and inactivated when dephosphorylated. In terms of biological role, phosphorylates inhibitors of NF-kappa-B thus leading to the dissociation of the inhibitor/NF-kappa-B complex and ultimately the degradation of the inhibitor. Phosphorylates 'Ser-10' of histone H3 at NF-kappa-B-regulated promoters during inflammatory responses triggered by cytokines. The chain is Inhibitor of nuclear factor kappa-B kinase subunit alpha (chuk) from Xenopus laevis (African clawed frog).